A 274-amino-acid chain; its full sequence is MTLQSQKAILSSFIEGAPPGELADVVADIKNLTSSTPNLINELGPAFQKYNEEQFTTVKLPGSSQHVIISSHNSLGGSRYYDVETSTSFAFDHTTQKASAVETYVVEGAQGDLTKSVIKALAPYVKEHYSNAAYGAWPIENDSKVAIIIVANKYSPNNYWNGRWRSLYILDPAAGTVEGSIKVDVHYYEDGNVRLLTDKPVTASVSATGAAIVKEISAVEKKYQEELNRSFASLSEGAFKALRRQLPVTRQKIEWEKIAGYRLGQDIGGGGARR.

The protein belongs to the F-actin-capping protein alpha subunit family. As to quaternary structure, heterodimer of an alpha and a beta subunit.

Its subcellular location is the cytoplasm. Functionally, F-actin-capping proteins bind in a Ca(2+)-independent manner to the fast growing ends of actin filaments (barbed end) thereby blocking the exchange of subunits at these ends. Unlike other capping proteins (such as gelsolin and severin), these proteins do not sever actin filaments. The polypeptide is F-actin-capping protein subunit alpha (Chaetomium thermophilum (strain DSM 1495 / CBS 144.50 / IMI 039719) (Thermochaetoides thermophila)).